Here is a 1048-residue protein sequence, read N- to C-terminus: Ceruloplasmin (1048 aa).

An N-terminal signal peptide occupies residues 1-19 (MKIFLLCIFLILCGTSVWA). 3 Plastocyanin-like domains span residues 20-200 (KDKH…LIHC), 209-357 (KEKN…VQDC), and 370-554 (NVRH…MKIC). Na(+)-binding residues include Y55, G64, and Y67. Cu(2+)-binding residues include H120 and H122. H120 serves as a coordination point for O2. Position 128 (K128) interacts with Ca(2+). N-linked (GlcNAc...) asparagine glycosylation occurs at N138. The Ca(2+) site is built by Q143, D146, and D147. C174 and C200 are disulfide-bonded. H180 and H182 together coordinate Cu(2+). H180 contributes to the O2 binding site. An N-linked (GlcNAc...) asparagine glycan is attached at N227. S256 is a binding site for Na(+). C276 and C357 form a disulfide bridge. H295, C338, and H343 together coordinate Cu(2+). F408, G417, and Y420 together coordinate Na(+). The cysteines at positions 530 and 554 are disulfide-linked. Residues N556 and N582 are each glycosylated (N-linked (GlcNAc...) asparagine). One can recognise a Plastocyanin-like 4 domain in the interval 564–712 (RLKNVDKEFY…MKQKYTVSQC (149 aa)). S611 provides a ligand contact to Na(+). Residues C631 and C712 are joined by a disulfide bond. Cu(2+)-binding residues include H650, C693, H698, and M703. Catalysis depends on C693, which acts as the Nucleophile; for glutathione peroxidase activity. S716 carries the phosphoserine modification. Plastocyanin-like domains follow at residues 724-894 (GERT…LIVC) and 902-1044 (SNPI…PNEE). N756 is a glycosylation site (N-linked (GlcNAc...) asparagine). Positions 761, 770, and 773 each coordinate Na(+). C868 and C894 are oxidised to a cystine. N920 carries an N-linked (GlcNAc...) asparagine glycan. S949 contacts Na(+). H977, H980, H982, H1022, C1023, H1024, H1028, and M1033 together coordinate Cu(2+). Residues H980 and H982 each coordinate O2. H1024 contributes to the O2 binding site.

Belongs to the multicopper oxidase family. Found in a complex with MPO and LTF; interacts directly with MPO and LTF, which allows Fe(3+) incorporation into LTF, activation of CP ferroxidase activity and protection of CP antioxidant properties by MPO. It depends on Cu(2+) as a cofactor. As to expression, expressed by the liver and secreted in plasma. Also expressed in the hypothalamus, spleen and uterus. No expression in the cortex, heart, intestine or kidney.

The protein localises to the secreted. It catalyses the reaction 4 Fe(2+) + O2 + 4 H(+) = 4 Fe(3+) + 2 H2O. It carries out the reaction 4 Cu(+) + O2 + 4 H(+) = 4 Cu(2+) + 2 H2O. The catalysed reaction is a hydroperoxide + 2 glutathione = an alcohol + glutathione disulfide + H2O. The enzyme catalyses 4 nitric oxide + O2 + 2 H2O = 4 nitrite + 4 H(+). It catalyses the reaction 2 glutathione + H2O2 = glutathione disulfide + 2 H2O. In terms of biological role, multifunctional blue, copper-binding (6-7 atoms per molecule) glycoprotein. It has ferroxidase activity oxidizing Fe(2+) to Fe(3+) without releasing radical oxygen species. It is involved in iron transport across the cell membrane. Copper ions provide a large number of enzymatic activites. Oxidizes highly toxic ferrous ions to the ferric state for further incorporation onto apo-transferrins, catalyzes Cu(+) oxidation and promotes the oxidation of biogenic amines such as norepinephrin and serotonin. Provides Cu(2+) ions for the ascorbate-mediated deaminase degradation of the heparan sulfate chains of GPC1. Has glutathione peroxidase-like activity, can remove both hydrogen peroxide and lipid hydroperoxide in the presence of thiols. Also shows NO-oxidase and NO2 synthase activities that determine endocrine NO homeostasis. The protein is Ceruloplasmin (CP) of Ovis aries (Sheep).